The sequence spans 301 residues: 4-hydroxy-tetrahydrodipicolinate synthase (301 aa).

Thr-46 is a binding site for pyruvate. Tyr-135 acts as the Proton donor/acceptor in catalysis. Lys-163 serves as the catalytic Schiff-base intermediate with substrate. Ile-205 serves as a coordination point for pyruvate.

This sequence belongs to the DapA family. In terms of assembly, homotetramer; dimer of dimers.

The protein localises to the cytoplasm. The enzyme catalyses L-aspartate 4-semialdehyde + pyruvate = (2S,4S)-4-hydroxy-2,3,4,5-tetrahydrodipicolinate + H2O + H(+). Its pathway is amino-acid biosynthesis; L-lysine biosynthesis via DAP pathway; (S)-tetrahydrodipicolinate from L-aspartate: step 3/4. Functionally, catalyzes the condensation of (S)-aspartate-beta-semialdehyde [(S)-ASA] and pyruvate to 4-hydroxy-tetrahydrodipicolinate (HTPA). This Lacticaseibacillus casei (strain BL23) (Lactobacillus casei) protein is 4-hydroxy-tetrahydrodipicolinate synthase.